A 531-amino-acid polypeptide reads, in one-letter code: Berberine bridge enzyme-like 9 (531 aa).

An N-terminal signal peptide occupies residues methionine 1–alanine 23. A disulfide bridge connects residues cysteine 35 and cysteine 99. Residues asparagine 76, asparagine 164, asparagine 271, asparagine 300, asparagine 314, asparagine 400, and asparagine 485 are each glycosylated (N-linked (GlcNAc...) asparagine). In terms of domain architecture, FAD-binding PCMH-type spans methionine 77–valine 252. A cross-link (6-(S-cysteinyl)-8alpha-(pros-histidyl)-FAD (His-Cys)) is located at residues histidine 114–cysteine 177.

Belongs to the oxygen-dependent FAD-linked oxidoreductase family. FAD serves as cofactor. In terms of processing, the FAD cofactor is bound via a bicovalent 6-S-cysteinyl, 8alpha-N1-histidyl FAD linkage. Accumulates in cell walls of etiolated hypocotyls.

Its subcellular location is the secreted. It localises to the cell wall. This chain is Berberine bridge enzyme-like 9, found in Arabidopsis thaliana (Mouse-ear cress).